We begin with the raw amino-acid sequence, 166 residues long: Interferon gamma (166 aa).

An N-terminal signal peptide occupies residues 1–23 (MKYTSYILAFQLCIVLGSLGCYC). Glutamine 24 bears the Pyrrolidone carboxylic acid mark. 3 N-linked (GlcNAc...) asparagine glycosylation sites follow: asparagine 48, asparagine 86, and asparagine 120.

Belongs to the type II (or gamma) interferon family. Homodimer. Interacts with IFNGR1 (via extracellular domain); this interaction promotes IFNGR1 dimerization. Released primarily from activated T lymphocytes.

Its subcellular location is the secreted. Functionally, type II interferon produced by immune cells such as T-cells and NK cells that plays crucial roles in antimicrobial, antiviral, and antitumor responses by activating effector immune cells and enhancing antigen presentation. Primarily signals through the JAK-STAT pathway after interaction with its receptor IFNGR1 to affect gene regulation. Upon IFNG binding, IFNGR1 intracellular domain opens out to allow association of downstream signaling components JAK2, JAK1 and STAT1, leading to STAT1 activation, nuclear translocation and transcription of IFNG-regulated genes. Many of the induced genes are transcription factors such as IRF1 that are able to further drive regulation of a next wave of transcription. Plays a role in class I antigen presentation pathway by inducing a replacement of catalytic proteasome subunits with immunoproteasome subunits. In turn, increases the quantity, quality, and repertoire of peptides for class I MHC loading. Increases the efficiency of peptide generation also by inducing the expression of activator PA28 that associates with the proteasome and alters its proteolytic cleavage preference. Up-regulates as well MHC II complexes on the cell surface by promoting expression of several key molecules such as cathepsins B/CTSB, H/CTSH, and L/CTSL. Participates in the regulation of hematopoietic stem cells during development and under homeostatic conditions by affecting their development, quiescence, and differentiation. The chain is Interferon gamma (IFNG) from Saimiri sciureus (Common squirrel monkey).